The primary structure comprises 271 residues: 4-hydroxy-tetrahydrodipicolinate reductase (271 aa).

NAD(+)-binding positions include 11-16 (GGSGRM) and Glu-37. NADP(+) is bound at residue Arg-38. NAD(+) is bound by residues 101–103 (GTT) and 125–128 (APNM). His-158 serves as the catalytic Proton donor/acceptor. (S)-2,3,4,5-tetrahydrodipicolinate is bound at residue His-159. The active-site Proton donor is the Lys-162. 168–169 (GT) is a binding site for (S)-2,3,4,5-tetrahydrodipicolinate.

This sequence belongs to the DapB family.

The protein resides in the cytoplasm. It carries out the reaction (S)-2,3,4,5-tetrahydrodipicolinate + NAD(+) + H2O = (2S,4S)-4-hydroxy-2,3,4,5-tetrahydrodipicolinate + NADH + H(+). The enzyme catalyses (S)-2,3,4,5-tetrahydrodipicolinate + NADP(+) + H2O = (2S,4S)-4-hydroxy-2,3,4,5-tetrahydrodipicolinate + NADPH + H(+). It functions in the pathway amino-acid biosynthesis; L-lysine biosynthesis via DAP pathway; (S)-tetrahydrodipicolinate from L-aspartate: step 4/4. In terms of biological role, catalyzes the conversion of 4-hydroxy-tetrahydrodipicolinate (HTPA) to tetrahydrodipicolinate. This is 4-hydroxy-tetrahydrodipicolinate reductase from Shewanella loihica (strain ATCC BAA-1088 / PV-4).